Reading from the N-terminus, the 226-residue chain is Thiopurine S-methyltransferase (226 aa).

Residues Trp16, Met51, Glu72, and Arg131 each coordinate S-adenosyl-L-methionine.

This sequence belongs to the class I-like SAM-binding methyltransferase superfamily. TPMT family.

The protein resides in the cytoplasm. The catalysed reaction is S-adenosyl-L-methionine + a thiopurine = S-adenosyl-L-homocysteine + a thiopurine S-methylether.. The chain is Thiopurine S-methyltransferase from Francisella tularensis subsp. novicida (strain U112).